The primary structure comprises 1115 residues: DNA-directed RNA polymerase subunit beta (1115 aa).

The disordered stretch occupies residues 1084-1115 (HEAGEGEDDEYFEEDEEAVDDEPMTFDDDDME). Acidic residues predominate over residues 1088-1115 (EGEDDEYFEEDEEAVDDEPMTFDDDDME).

It belongs to the RNA polymerase beta chain family. In terms of assembly, the RNAP catalytic core consists of 2 alpha, 1 beta, 1 beta' and 1 omega subunit. When a sigma factor is associated with the core the holoenzyme is formed, which can initiate transcription.

The catalysed reaction is RNA(n) + a ribonucleoside 5'-triphosphate = RNA(n+1) + diphosphate. In terms of biological role, DNA-dependent RNA polymerase catalyzes the transcription of DNA into RNA using the four ribonucleoside triphosphates as substrates. This Desulfitobacterium hafniense (strain Y51) protein is DNA-directed RNA polymerase subunit beta.